Here is a 336-residue protein sequence, read N- to C-terminus: Biotin synthase (336 aa).

A Radical SAM core domain is found at 54–281; the sequence is NAIQLSTLLS…KAMVRLSAGR (228 aa). [4Fe-4S] cluster is bound by residues C69, C73, and C76. Residues C113, C144, C204, and R276 each coordinate [2Fe-2S] cluster.

It belongs to the radical SAM superfamily. Biotin synthase family. Homodimer. The cofactor is [4Fe-4S] cluster. [2Fe-2S] cluster serves as cofactor.

It carries out the reaction (4R,5S)-dethiobiotin + (sulfur carrier)-SH + 2 reduced [2Fe-2S]-[ferredoxin] + 2 S-adenosyl-L-methionine = (sulfur carrier)-H + biotin + 2 5'-deoxyadenosine + 2 L-methionine + 2 oxidized [2Fe-2S]-[ferredoxin]. Its pathway is cofactor biosynthesis; biotin biosynthesis; biotin from 7,8-diaminononanoate: step 2/2. Its function is as follows. Catalyzes the conversion of dethiobiotin (DTB) to biotin by the insertion of a sulfur atom into dethiobiotin via a radical-based mechanism. The chain is Biotin synthase from Burkholderia pseudomallei (strain 1710b).